The primary structure comprises 780 residues: ATP-dependent 6-phosphofructokinase, muscle type (780 aa).

Residue Thr-2 is modified to N-acetylthreonine. Positions 2–390 are N-terminal catalytic PFK domain 1; that stretch reads THEEHHAAKT…NWEVYKLLAH (389 aa). ATP contacts are provided by residues Gly-25, 88–89, and 118–121; these read RC and GDGS. Residue Asp-119 participates in Mg(2+) binding. The residue at position 133 (Ser-133) is a Phosphoserine. Substrate is bound by residues 164 to 166, Arg-201, 208 to 210, Glu-264, Arg-292, and 298 to 301; these read SID, MGR, and HVQR. Asp-166 acts as the Proton acceptor in catalysis. Residue Ser-377 is modified to Phosphoserine. An interdomain linker region spans residues 391–401; it reads VRPPVSKSGSH. Residues 402-780 are C-terminal regulatory PFK domain 2; sequence TVAVMNVGAP…TRKRSGEGAV (379 aa). Beta-D-fructose 2,6-bisphosphate contacts are provided by residues Arg-471 and 528–532; that span reads TVSNN. O-linked (GlcNAc) serine glycosylation is present at Ser-530. Residue Lys-557 is modified to N6-(2-hydroxyisobutyryl)lysine. Residues Arg-566, 573–575, Glu-629, Arg-655, and 661–664 contribute to the beta-D-fructose 2,6-bisphosphate site; these read MGG and HMQQ. Ser-667 is modified (phosphoserine). Arg-735 provides a ligand contact to beta-D-fructose 2,6-bisphosphate. Ser-775 bears the Phosphoserine mark.

It belongs to the phosphofructokinase type A (PFKA) family. ATP-dependent PFK group I subfamily. Eukaryotic two domain clade 'E' sub-subfamily. As to quaternary structure, homo- and heterotetramers. Phosphofructokinase (PFK) enzyme functions as a tetramer composed of different combinations of 3 types of subunits, called PFKM (M), PFKL (L) and PFKP (P). The composition of the PFK tetramer differs according to the tissue type it is present in. The kinetic and regulatory properties of the tetrameric enzyme are dependent on the subunit composition, hence can vary across tissues. Interacts (via C-terminus) with HK1 (via N-terminal spermatogenic cell-specific region). Mg(2+) is required as a cofactor. GlcNAcylation decreases enzyme activity.

It is found in the cytoplasm. The catalysed reaction is beta-D-fructose 6-phosphate + ATP = beta-D-fructose 1,6-bisphosphate + ADP + H(+). It functions in the pathway carbohydrate degradation; glycolysis; D-glyceraldehyde 3-phosphate and glycerone phosphate from D-glucose: step 3/4. Allosterically activated by ADP, AMP, or fructose 2,6-bisphosphate, and allosterically inhibited by ATP or citrate. In terms of biological role, catalyzes the phosphorylation of D-fructose 6-phosphate to fructose 1,6-bisphosphate by ATP, the first committing step of glycolysis. The protein is ATP-dependent 6-phosphofructokinase, muscle type (PFKM) of Macaca fascicularis (Crab-eating macaque).